We begin with the raw amino-acid sequence, 308 residues long: UDP-3-O-acyl-N-acetylglucosamine deacetylase (308 aa).

Zn(2+)-binding residues include His78, His235, and Asp239. His262 serves as the catalytic Proton donor.

It belongs to the LpxC family. Requires Zn(2+) as cofactor.

It carries out the reaction a UDP-3-O-[(3R)-3-hydroxyacyl]-N-acetyl-alpha-D-glucosamine + H2O = a UDP-3-O-[(3R)-3-hydroxyacyl]-alpha-D-glucosamine + acetate. It functions in the pathway glycolipid biosynthesis; lipid IV(A) biosynthesis; lipid IV(A) from (3R)-3-hydroxytetradecanoyl-[acyl-carrier-protein] and UDP-N-acetyl-alpha-D-glucosamine: step 2/6. In terms of biological role, catalyzes the hydrolysis of UDP-3-O-myristoyl-N-acetylglucosamine to form UDP-3-O-myristoylglucosamine and acetate, the committed step in lipid A biosynthesis. This chain is UDP-3-O-acyl-N-acetylglucosamine deacetylase, found in Anaeromyxobacter dehalogenans (strain 2CP-C).